The following is a 249-amino-acid chain: Large ribosomal subunit protein uL1 (249 aa).

The protein belongs to the universal ribosomal protein uL1 family. Part of the 50S ribosomal subunit.

Functionally, binds directly to 23S rRNA. The L1 stalk is quite mobile in the ribosome, and is involved in E site tRNA release. In terms of biological role, protein L1 is also a translational repressor protein, it controls the translation of the L11 operon by binding to its mRNA. This Orientia tsutsugamushi (strain Ikeda) (Rickettsia tsutsugamushi) protein is Large ribosomal subunit protein uL1.